The sequence spans 82 residues: Small ribosomal subunit protein bS16 (82 aa).

It belongs to the bacterial ribosomal protein bS16 family.

This Microcystis aeruginosa (strain NIES-843 / IAM M-2473) protein is Small ribosomal subunit protein bS16.